The sequence spans 533 residues: GMP synthase [glutamine-hydrolyzing] (533 aa).

Positions 25–215 (SIVIFDFGSQ…VFNICKCHAN (191 aa)) constitute a Glutamine amidotransferase type-1 domain. Catalysis depends on Cys102, which acts as the Nucleophile. Residues His189 and Glu191 contribute to the active site. In terms of domain architecture, GMPS ATP-PPase spans 216-408 (WTMGNYIQES…LGLPDEMIWR (193 aa)). 243–249 (SGGVDSA) serves as a coordination point for ATP.

Homodimer.

It catalyses the reaction XMP + L-glutamine + ATP + H2O = GMP + L-glutamate + AMP + diphosphate + 2 H(+). The protein operates within purine metabolism; GMP biosynthesis; GMP from XMP (L-Gln route): step 1/1. In terms of biological role, catalyzes the synthesis of GMP from XMP. The polypeptide is GMP synthase [glutamine-hydrolyzing] (Dehalococcoides mccartyi (strain ATCC BAA-2266 / KCTC 15142 / 195) (Dehalococcoides ethenogenes (strain 195))).